The chain runs to 59 residues: Large ribosomal subunit protein bL32 (59 aa).

Basic residues predominate over residues 1 to 16 (MAVPKRKTSPSRRGMR). A disordered region spans residues 1–59 (MAVPKRKTSPSRRGMRRSADALKAPTYVEDKNSGELRRPHHIDLKSGMYRGRQVLEPKE). The span at 28-44 (VEDKNSGELRRPHHIDL) shows a compositional bias: basic and acidic residues.

This sequence belongs to the bacterial ribosomal protein bL32 family.

This chain is Large ribosomal subunit protein bL32, found in Brucella abortus (strain S19).